Here is a 673-residue protein sequence, read N- to C-terminus: Acetoacetyl-CoA synthetase (673 aa).

The protein belongs to the ATP-dependent AMP-binding enzyme family.

The protein localises to the cytoplasm. The protein resides in the cytosol. The enzyme catalyses acetoacetate + ATP + CoA = acetoacetyl-CoA + AMP + diphosphate. Functionally, converts acetoacetate to acetoacetyl-CoA in the cytosol. Ketone body-utilizing enzyme, responsible for the synthesis of cholesterol and fatty acids. The protein is Acetoacetyl-CoA synthetase (aacs) of Danio rerio (Zebrafish).